The sequence spans 50 residues: Small ribosomal subunit protein uS14 (50 aa).

Residues C15, C18, C33, and C36 each coordinate Zn(2+).

Belongs to the universal ribosomal protein uS14 family. Zinc-binding uS14 subfamily. Part of the 30S ribosomal subunit. Zn(2+) is required as a cofactor.

Binds 16S rRNA, required for the assembly of 30S particles. This Methanosarcina acetivorans (strain ATCC 35395 / DSM 2834 / JCM 12185 / C2A) protein is Small ribosomal subunit protein uS14.